A 318-amino-acid polypeptide reads, in one-letter code: MAKRRKGRQVNGVLLLDKPHGLSSNHALQTVKRIYFAQKAGHTGALDPLATGMLPICLGEGTKFSQYLLDTDKTYQVTAKLGIRTTTSDAGGEVVSEKTVDVSSEQLAKALDSFRGTTKQVPSMYSALKHQGQPLYKYAREGIEVPREARDITVFNLELLRFEHDEVELNIHVSKGTYIRTIVDDLGELLGCGAHVAHLRRSAVGNYPVEKMITLPELEALLEQANADEITPSDVLDPLLLPMNSAVDGMHCVYVDDMSANFLRHGNPVQAYNQPEAGSVQVYLGEDENDADAEFIGVGFINDDGLVAPKRIVVLEQY.

The active-site Nucleophile is the D47.

The protein belongs to the pseudouridine synthase TruB family. Type 1 subfamily.

The enzyme catalyses uridine(55) in tRNA = pseudouridine(55) in tRNA. In terms of biological role, responsible for synthesis of pseudouridine from uracil-55 in the psi GC loop of transfer RNAs. In Colwellia psychrerythraea (strain 34H / ATCC BAA-681) (Vibrio psychroerythus), this protein is tRNA pseudouridine synthase B.